A 160-amino-acid chain; its full sequence is MTIAVYPGSFDPVTNGHLDIAARASRIFDTVIMAVFDRPNKQLLFSTEERVALLRESTRHLPRVKVDTYSTLTVDYVRSVGASVIVRGMRAVGDFEAEFQLAQINQTLAPDIDIVLFMASHRYTFFSSSTVREIASLGGDVSWLVPGPVVEALKRAYGRR.

Ser-9 is a binding site for substrate. ATP is bound by residues 9-10 (SF) and His-17. Positions 41, 73, and 87 each coordinate substrate. ATP is bound by residues 88–90 (GMR), Glu-98, and 123–129 (YTFFSSS).

Belongs to the bacterial CoaD family. In terms of assembly, homohexamer. Requires Mg(2+) as cofactor.

Its subcellular location is the cytoplasm. It carries out the reaction (R)-4'-phosphopantetheine + ATP + H(+) = 3'-dephospho-CoA + diphosphate. Its pathway is cofactor biosynthesis; coenzyme A biosynthesis; CoA from (R)-pantothenate: step 4/5. Reversibly transfers an adenylyl group from ATP to 4'-phosphopantetheine, yielding dephospho-CoA (dPCoA) and pyrophosphate. The chain is Phosphopantetheine adenylyltransferase from Roseiflexus sp. (strain RS-1).